A 302-amino-acid chain; its full sequence is Acetaldehyde dehydrogenase (302 aa).

12–15 (SGNI) contacts NAD(+). Catalysis depends on cysteine 127, which acts as the Acyl-thioester intermediate. NAD(+) contacts are provided by residues 158-166 (SAGPGTRQN) and asparagine 276.

Belongs to the acetaldehyde dehydrogenase family.

It catalyses the reaction acetaldehyde + NAD(+) + CoA = acetyl-CoA + NADH + H(+). The sequence is that of Acetaldehyde dehydrogenase (nahO) from Geobacillus genomosp. 3.